The sequence spans 677 residues: Protein PALS1 (677 aa).

The interval 1 to 347 (MTTSHMNGYV…AQIKSPPIKE (347 aa)) is required for the correct localization of PALS1 and PATJ at cell-cell contacts and the normal formation of tight junctions and adherens junctions. A disordered region spans residues 39–81 (ELGARTLPVRRSAQLEKIRQQQEDRRRREEEGRSRQELDLNSS). A compositionally biased stretch (basic and acidic residues) spans 51 to 76 (AQLEKIRQQQEDRRRREEEGRSRQEL). 2 L27 domains span residues 121 to 178 (ALLE…NRPS) and 180 to 236 (PYPL…MQLE). The PDZ domain occupies 258 to 338 (IVRIEKAKDI…VLSFVLIPSA (81 aa)). Positions 347–419 (ETVVHVKAHF…PGKSFQQQRE (73 aa)) constitute an SH3 domain. The region spanning 481 to 662 (KRPIALIGPP…SYQELLRLIN (182 aa)) is the Guanylate kinase-like domain. 488–495 (GPPNCGQN) contacts ATP. The tract at residues 506-526 (PDRFAGPVPHTTRSRRDAEAN) is disordered.

The protein belongs to the MAGUK family. As to expression, expressed in the retina and in the neural tube.

It localises to the apical cell membrane. The protein resides in the cell junction. The protein localises to the tight junction. In terms of biological role, plays a role in tight junction biogenesis and in the establishment of cell polarity in epithelial cells. Also involved in adherens junction biogenesis. Required for polarized epithelial organization, cell-cell adhesion and remodeling of myocardial cells during heart tube elongation during embryogenesis. Functions in cellular patterning of the retina and development of the retinal pigmented epithelium. Also required for embryo body axis specification. In Danio rerio (Zebrafish), this protein is Protein PALS1 (pals1a).